We begin with the raw amino-acid sequence, 408 residues long: Leucine aminopeptidase 1 (408 aa).

An N-terminal signal peptide occupies residues 1-16 (MKVSSAIALLLPVVAA). A propeptide spanning residues 17–89 (RFVDSAFEQD…SAQSATTGPA (73 aa)) is cleaved from the precursor. 3 N-linked (GlcNAc...) asparagine glycosylation sites follow: N95, N108, and N182. Zn(2+)-binding residues include H190, D209, E248, and D275. Cysteines 324 and 328 form a disulfide. H357 contacts Zn(2+).

The protein belongs to the peptidase M28 family. M28E subfamily. In terms of assembly, monomer. Zn(2+) is required as a cofactor.

The protein localises to the secreted. Extracellular aminopeptidase that allows assimilation of proteinaceous substrates. The chain is Leucine aminopeptidase 1 (LAP1) from Grosmannia clavigera (strain kw1407 / UAMH 11150) (Blue stain fungus).